Consider the following 373-residue polypeptide: LIM domain-binding protein 2 (373 aa).

2 disordered regions span residues 244–287 (APPA…KTPA) and 327–373 (QYDA…QASQ). A compositionally biased stretch (low complexity) spans 263–280 (STSSTSNSSAGNTTNSAG). An LIM interaction domain (LID) domain is found at 298-337 (DVMVVGEPTLMGGEFGDEDERLITRLENTQYDAANGMDDE). The segment covering 341–373 (NNSPALGNNSPWNSKPPATQETKSENAPPQASQ) has biased composition (polar residues).

The protein belongs to the LDB family. Interacts with LHX9. Interacts with SLK; leading to negatively regulate SLK kinase activity. Interacts with LMO4. As to quaternary structure, interacts with PITX1. Interacts with LHX3. Post-translationally, ubiquitinated by RLIM/RNF12, leading to its degradation by the proteasome. As to expression, expressed in multiple tissues including heart, brain, liver, kidney, testis, lung and muscle, with expression highest in the brain, trigeminal ganglia, and lung.

Its subcellular location is the nucleus. Functionally, transcription cofactor. Binds to the LIM domain of a wide variety of LIM domain-containing transcription factors. In terms of biological role, regulates the transcriptional activity of LIM-containing proteins such as LHX3 or PITX1. This chain is LIM domain-binding protein 2 (Ldb2), found in Mus musculus (Mouse).